A 280-amino-acid polypeptide reads, in one-letter code: Protein FAM131C (280 aa).

Residues 195–280 (QDSLPSGPSQ…LWEEDEVFYN (86 aa)) form a disordered region. Residues 197 to 211 (SLPSGPSQDDSLQAF) show a composition bias toward polar residues. The segment covering 215 to 227 (SPSPDSCPSPEEP) has biased composition (pro residues).

It belongs to the FAM131 family.

In Homo sapiens (Human), this protein is Protein FAM131C (FAM131C).